The following is a 283-amino-acid chain: Bifunctional protein FolD (283 aa).

NADP(+)-binding positions include 165–167 and Ser-190; that span reads GRS.

It belongs to the tetrahydrofolate dehydrogenase/cyclohydrolase family. Homodimer.

The catalysed reaction is (6R)-5,10-methylene-5,6,7,8-tetrahydrofolate + NADP(+) = (6R)-5,10-methenyltetrahydrofolate + NADPH. The enzyme catalyses (6R)-5,10-methenyltetrahydrofolate + H2O = (6R)-10-formyltetrahydrofolate + H(+). It functions in the pathway one-carbon metabolism; tetrahydrofolate interconversion. Functionally, catalyzes the oxidation of 5,10-methylenetetrahydrofolate to 5,10-methenyltetrahydrofolate and then the hydrolysis of 5,10-methenyltetrahydrofolate to 10-formyltetrahydrofolate. This Variovorax paradoxus (strain S110) protein is Bifunctional protein FolD.